A 101-amino-acid polypeptide reads, in one-letter code: Salivary thrombin inhibitor anophelin (101 aa).

The N-terminal stretch at 1 to 21 (MASKVIVIALLCIALAAFVQG) is a signal peptide. The interval 26–101 (THGEEPEYDE…SDSSSGSTEN (76 aa)) is disordered. Over residues 31–40 (PEYDEDDGAD) the composition is skewed to acidic residues. The segment at 75-78 (DPGR) is blocks active site cleft of host thrombin in a reverse direction compared to substrates. Basic and acidic residues predominate over residues 75–87 (DPGRRPEFLKQHN). Positions 88–101 (NENQSDSSSGSTEN) are enriched in polar residues. N-linked (GlcNAc...) asparagine glycosylation occurs at Asn-90.

The protein belongs to the anophelin family. In terms of assembly, interacts with human F2 (thrombin); the interaction results in thrombin inhibition.

The protein localises to the secreted. Salivary protein with anticoagulant activity that inhibits host thrombin (F2). In Anopheles stephensi (Indo-Pakistan malaria mosquito), this protein is Salivary thrombin inhibitor anophelin.